A 420-amino-acid polypeptide reads, in one-letter code: UDP-glucuronic acid decarboxylase 1 (420 aa).

Met-1 bears the N-acetylmethionine mark. At 1–19 the chain is on the cytoplasmic side; the sequence is MVSKALLRLVSAVNRRRMK. A helical; Signal-anchor for type II membrane protein transmembrane segment spans residues 20-40; it reads LLLGIALLAYVASVWGNFVNM. Over 41 to 420 the chain is Lumenal; that stretch reads RSIQENGELK…RIKKGRTRHS (380 aa). At Thr-94 the chain carries Phosphothreonine. 10 residues coordinate NAD(+): Gly-98, Phe-99, Val-100, Asp-119, Asn-120, Phe-122, Thr-123, Gly-124, Asp-144, and Val-145. UDP-alpha-D-glucuronate-binding residues include Leu-149 and Tyr-150. Positions 159 and 161 each coordinate NAD(+). Lys-177 serves as a coordination point for UDP-alpha-D-glucuronate. Thr-178 contacts NAD(+). UDP-alpha-D-glucuronate is bound by residues Asn-185, Gly-188, Lys-191, and Arg-192. Residues Ala-200, Tyr-231, and Lys-235 each coordinate NAD(+). Catalysis depends on Tyr-231, which acts as the Proton acceptor. UDP-alpha-D-glucuronate-binding residues include Tyr-245, Gln-248, and Glu-249. 3 residues coordinate NAD(+): Thr-261, His-267, and Arg-272. Asn-316 carries N-linked (GlcNAc...) asparagine glycosylation.

Belongs to the NAD(P)-dependent epimerase/dehydratase family. UDP-glucuronic acid decarboxylase subfamily. Homodimer and homotetramer. Interacts with AKT1. Requires NAD(+) as cofactor.

The protein localises to the golgi apparatus. It localises to the golgi stack membrane. The enzyme catalyses UDP-alpha-D-glucuronate + H(+) = UDP-alpha-D-xylose + CO2. It participates in nucleotide-sugar biosynthesis; UDP-alpha-D-xylose biosynthesis; UDP-alpha-D-xylose from UDP-alpha-D-glucuronate: step 1/1. Functionally, catalyzes the NAD-dependent decarboxylation of UDP-glucuronic acid to UDP-xylose. Necessary for the biosynthesis of the core tetrasaccharide in glycosaminoglycan biosynthesis. The polypeptide is UDP-glucuronic acid decarboxylase 1 (Homo sapiens (Human)).